Here is a 345-residue protein sequence, read N- to C-terminus: Acyl-CoA--sterol O-acyltransferase 1 (345 aa).

9 helical membrane-spanning segments follow: residues 1–21 (MASFIKAWGLVIISLCYTFFI), 32–52 (LILFFPVFLIFFIVPFLIYSL), 54–74 (LLGITAFFIAWLANFKLLLFA), 86–106 (PLSLPIFLAVSCLPIKIQLSP), 120–140 (GPLIYTIKAVFVVLIIKAYEY), 148–168 (VVLTLYAIHIYFALEIILAAT), 231–251 (ILAAFGTFVVSGIMHELIFFY), 258–278 (DWKMMWFFLINGFCTTVEIAI), and 291–311 (AISQVLTLTFVMVTALWLFLP).

It belongs to the wax synthase family.

The protein localises to the membrane. In terms of biological role, involved in the esterification of cycloartenol. Not implicated in the formation of sterol esters in flowers or during seed maturation. Has a substrate preference toward saturated fatty acyl donors (16:0 &gt; 18:0 &gt; 16:1 &gt; 18:1). Does not require triacyglycerols (TAGs) as a fatty acyl donor, and is unable to acylate diacylglycerol to produce TAG. This is Acyl-CoA--sterol O-acyltransferase 1 (ASAT1) from Arabidopsis thaliana (Mouse-ear cress).